The following is a 364-amino-acid chain: Aminomethyltransferase (364 aa).

It belongs to the GcvT family. The glycine cleavage system is composed of four proteins: P, T, L and H.

The enzyme catalyses N(6)-[(R)-S(8)-aminomethyldihydrolipoyl]-L-lysyl-[protein] + (6S)-5,6,7,8-tetrahydrofolate = N(6)-[(R)-dihydrolipoyl]-L-lysyl-[protein] + (6R)-5,10-methylene-5,6,7,8-tetrahydrofolate + NH4(+). Its function is as follows. The glycine cleavage system catalyzes the degradation of glycine. The polypeptide is Aminomethyltransferase (Escherichia coli O157:H7).